The chain runs to 317 residues: Adenine deaminase (317 aa).

Zn(2+)-binding residues include His-14, His-16, and His-194. Glu-197 functions as the Proton donor in the catalytic mechanism. Asp-275 serves as a coordination point for Zn(2+). Asp-276 contacts substrate.

Belongs to the metallo-dependent hydrolases superfamily. Adenosine and AMP deaminases family. Adenine deaminase type 2 subfamily. Zn(2+) serves as cofactor.

It catalyses the reaction adenine + H2O + H(+) = hypoxanthine + NH4(+). Functionally, catalyzes the hydrolytic deamination of adenine to hypoxanthine. Plays an important role in the purine salvage pathway and in nitrogen catabolism. This Pseudomonas syringae pv. syringae (strain B728a) protein is Adenine deaminase.